The sequence spans 357 residues: SNF1-related protein kinase regulatory subunit gamma-like PV42b (357 aa).

CBS domains follow at residues 16-97, 113-185, 198-273, and 293-351; these read MIDK…DGES, HCPE…SSQL, AIHN…WLPL, and STPG…ALLS.

The protein belongs to the 5'-AMP-activated protein kinase gamma subunit family. As to expression, expressed highly in rosette leaves, cauline leaves, open flowers, developing siliques and dry seeds, but at a low level in stems and floral buds.

Plays redundant role with PV42a in regulating male gametogenesis and pollen tube guidance. The chain is SNF1-related protein kinase regulatory subunit gamma-like PV42b (PV42B) from Arabidopsis thaliana (Mouse-ear cress).